Consider the following 129-residue polypeptide: Fluoride-specific ion channel FluC (129 aa).

Transmembrane regions (helical) follow at residues leucine 5–valine 25, alanine 32–methionine 52, leucine 60–phenylalanine 80, and alanine 99–isoleucine 119. Residues glycine 75 and threonine 78 each contribute to the Na(+) site.

Belongs to the fluoride channel Fluc/FEX (TC 1.A.43) family.

Its subcellular location is the cell inner membrane. The catalysed reaction is fluoride(in) = fluoride(out). With respect to regulation, na(+) is not transported, but it plays an essential structural role and its presence is essential for fluoride channel function. Functionally, fluoride-specific ion channel. Important for reducing fluoride concentration in the cell, thus reducing its toxicity. This is Fluoride-specific ion channel FluC from Pelobacter propionicus (strain DSM 2379 / NBRC 103807 / OttBd1).